The following is a 245-amino-acid chain: DNA polymerase sliding clamp (245 aa).

Belongs to the PCNA family. Homotrimer. The subunits circularize to form a toroid; DNA passes through its center. Replication factor C (RFC) is required to load the toroid on the DNA.

Sliding clamp subunit that acts as a moving platform for DNA processing. Responsible for tethering the catalytic subunit of DNA polymerase and other proteins to DNA during high-speed replication. This is DNA polymerase sliding clamp from Methanosarcina barkeri (strain Fusaro / DSM 804).